Reading from the N-terminus, the 214-residue chain is Exosome complex component RRP46 homolog (214 aa).

Belongs to the RNase PH family. Homodimer. Component of the RNA exosome complex. Interacts with crn-4; interaction promotes the DNase activity of crn-4. Interacts with crn-3, cps-6 and cyn-13.

It is found in the cytoplasm. The protein localises to the nucleus. In terms of biological role, non-catalytic component of the RNA exosome complex which has 3'-&gt;5' exoribonuclease activity and participates in a multitude of cellular RNA processing and degradation events. Involved in apoptotic DNA degradation. In vitro, does not bind or digest single-stranded RNA. In vitro, binds to double-stranded DNA without detectable DNase activity. The chain is Exosome complex component RRP46 homolog from Caenorhabditis elegans.